Here is a 236-residue protein sequence, read N- to C-terminus: Chorionic somatomammotropin hormone 1 (236 aa).

Residues 1–36 (MAPASSHRGHQWICDLVRGSCLLLLLVVSNLLLCQG) form the signal peptide. N-linked (GlcNAc...) asparagine glycosylation occurs at Asn-89. 2 cysteine pairs are disulfide-bonded: Cys-98/Cys-214 and Cys-231/Cys-236.

It belongs to the somatotropin/prolactin family.

The protein resides in the secreted. The sequence is that of Chorionic somatomammotropin hormone 1 (CSH1) from Bos taurus (Bovine).